We begin with the raw amino-acid sequence, 834 residues long: Ras GTPase-activating protein 3 (834 aa).

2 consecutive C2 domains span residues 1-112 (MAVE…DTWF) and 123-263 (VQGK…EAWY). Alanine 2 is modified (N-acetylalanine). Residue tyrosine 66 is modified to Phosphotyrosine. At serine 77 the chain carries Phosphoserine. Threonine 110 carries the phosphothreonine modification. In terms of domain architecture, Ras-GAP spans 346–561 (GRVVPFISAI…DAVKNFLDLI (216 aa)). Residues 576-677 (ILLKEGFMIK…WIDILTKVSQ (102 aa)) form the PH domain. Residues 679-715 (NQKRLTVFHPSAYLNGHWLCCRASSDTAAGCTPCTGG) form a Btk-type zinc finger. Residues histidine 687, cysteine 698, cysteine 699, and cysteine 709 each contribute to the Zn(2+) site. Phosphoserine occurs at positions 809 and 833.

In terms of tissue distribution, high levels in brain, lower in spleen and lung.

Inhibitory regulator of the Ras-cyclic AMP pathway. May bind inositol tetrakisphosphate (IP4). This is Ras GTPase-activating protein 3 (Rasa3) from Mus musculus (Mouse).